Reading from the N-terminus, the 1236-residue chain is MANGGGGGGGSSGGGGGGGGSSLRMSSNIHANHLSLDASSSSSSSSSSSSSSSSSSSSSSVHEPKMDALIIPVTMEVPCDSRGQRMWWAFLASSMVTFFGGLFIILLWRTLKYLWTVCCHCGGKTKEAQKINNGSSQADGTLKPVDEKEEAVAAEVGWMTSVKDWAGVMISAQTLTGRVLVVLVFALSIGALVIYFIDSSNPIESCQNFYKDFTLQIDMAFNVFFLLYFGLRFIAANDKLWFWLEVNSVVDFFTVPPVFVSVYLNRSWLGLRFLRALRLIQFSEILQFLNILKTSNSIKLVNLLSIFISTWLTAAGFIHLVENSGDPWENFQNNQALTYWECVYLLMVTMSTVGYGDVYAKTTLGRLFMVFFILGGLAMFASYVPEIIELIGNRKKYGGSYSAVSGRKHIVVCGHITLESVSNFLKDFLHKDRDDVNVEIVFLHNISPNLELEALFKRHFTQVEFYQGSVLNPHDLARVKIESADACLILANKYCADPDAEDASNIMRVISIKNYHPKIRIITQMLQYHNKAHLLNIPSWNWKEGDDAICLAELKLGFIAQSCLAQGLSTMLANLFSMRSFIKIEEDTWQKYYLEGVSNEMYTEYLSSAFVGLSFPTVCELCFVKLKLLMIAIEYKSANRESRILINPGNHLKIQEGTLGFFIASDAKEVKRAFFYCKACHDDITDPKRIKKCGCKRPKMSIYKRMRRACCFDCGRSERDCSCMSGRVRGNVDTLERAFPLSSVSVNDCSTSFRAFEDEQPSTLSPKKKQRNGGMRNSPNTSPKLMRHDPLLIPGNDQIDNMDSNVKKYDSTGMFHWCAPKEIEKVILTRSEAAMTVLSGHVVVCIFGDVSSALIGLRNLVMPLRASNFHYHELKHIVFVGSIEYLKREWETLHNFPKVSILPGTPLSRADLRAVNINLCDMCVILSANQNNIDDTSLQDKECILASLNIKSMQFDDSIGVLQANSQGFTPPGMDRSSPDNSPVHGMLRQPSITTGVNIPIITELVNDTNVQFLDQDDDDDPDTELYLTQPFACGTAFAVSVLDSLMSATYFNDNILTLIRTLVTGGATPELEALIAEENALRGGYSTPQTLANRDRCRVAQLALLDGPFADLGDGGCYGDLFCKALKTYNMLCFGIYRLRDAHLSTPSQCTKRYVITNPPYEFELVPTDLIFCLMQFDHNAGQSRASLSHSSHSSQSSSKKSSSVHSIPSTANRQNRPKSRESRDKQKYVQEERL.

Over residues 1–21 (MANGGGGGGGSSGGGGGGGGS) the composition is skewed to gly residues. Residues 1–61 (MANGGGGGGG…SSSSSSSSSV (61 aa)) are disordered. At 1-86 (MANGGGGGGG…VPCDSRGQRM (86 aa)) the chain is on the extracellular side. Residues 39–60 (SSSSSSSSSSSSSSSSSSSSSS) show a composition bias toward low complexity. Residues 87-107 (WWAFLASSMVTFFGGLFIILL) traverse the membrane as a helical segment. Topologically, residues 108 to 178 (WRTLKYLWTV…MISAQTLTGR (71 aa)) are cytoplasmic. 3 S-palmitoyl cysteine lipidation sites follow: Cys118, Cys119, and Cys121. The helical transmembrane segment at 179–199 (VLVVLVFALSIGALVIYFIDS) threads the bilayer. The Extracellular portion of the chain corresponds to 200–214 (SNPIESCQNFYKDFT). Residues 215–235 (LQIDMAFNVFFLLYFGLRFIA) traverse the membrane as a helical segment. Over 236-239 (ANDK) the chain is Cytoplasmic. A helical transmembrane segment spans residues 240–260 (LWFWLEVNSVVDFFTVPPVFV). Residues 261-264 (SVYL) are Extracellular-facing. A helical transmembrane segment spans residues 265–285 (NRSWLGLRFLRALRLIQFSEI). The Cytoplasmic segment spans residues 286–300 (LQFLNILKTSNSIKL). A helical transmembrane segment spans residues 301-321 (VNLLSIFISTWLTAAGFIHLV). Over 322 to 335 (ENSGDPWENFQNNQ) the chain is Extracellular. Positions 336–358 (ALTYWECVYLLMVTMSTVGYGDV) form an intramembrane region, pore-forming. A Selectivity for potassium motif is present at residues 352 to 355 (TVGY). At 359–367 (YAKTTLGRL) the chain is on the extracellular side. A helical transmembrane segment spans residues 368–388 (FMVFFILGGLAMFASYVPEII). Topologically, residues 389–1236 (ELIGNRKKYG…KQKYVQEERL (848 aa)) are cytoplasmic. The RCK N-terminal 1 domain occupies 407–549 (RKHIVVCGHI…WNWKEGDDAI (143 aa)). 3 residues coordinate Mg(2+): Glu439, Gln462, and Glu464. A segment S7 region spans residues 556–576 (LGFIAQSCLAQGLSTMLANLF). The segment S8 stretch occupies residues 613–633 (LSFPTVCELCFVKLKLLMIAI). A heme-binding motif region spans residues 677 to 681 (CKACH). Residues 757–787 (EDEQPSTLSPKKKQRNGGMRNSPNTSPKLMR) are disordered. Thr763 is subject to Phosphothreonine. Ser765, Ser778, and Ser782 each carry phosphoserine. The segment S9 stretch occupies residues 837–857 (VLSGHVVVCIFGDVSSALIGL). The region spanning 839 to 983 (SGHVVVCIFG…MDRSSPDNSP (145 aa)) is the RCK N-terminal 2 domain. Thr970 is subject to Phosphothreonine. Residues Ser978 and Ser982 each carry the phosphoserine modification. The Calcium bowl signature appears at 1003–1025 (TELVNDTNVQFLDQDDDDDPDTE). 4 residues coordinate Ca(2+): Gln1012, Asp1015, Asp1018, and Asp1020. The tract at residues 1032–1052 (FACGTAFAVSVLDSLMSATYF) is segment S10. The span at 1186 to 1211 (RASLSHSSHSSQSSSKKSSSVHSIPS) shows a compositional bias: low complexity. The segment at 1186 to 1236 (RASLSHSSHSSQSSSKKSSSVHSIPSTANRQNRPKSRESRDKQKYVQEERL) is disordered. Basic and acidic residues predominate over residues 1220 to 1236 (KSRESRDKQKYVQEERL). Residues Ser1221 and Ser1224 each carry the phosphoserine modification.

The protein belongs to the potassium channel family. Calcium-activated (TC 1.A.1.3) subfamily. KCa1.1/KCNMA1 sub-subfamily. In terms of assembly, homotetramer; which constitutes the calcium-activated potassium channel. Interacts with RAB11B. Interacts with beta subunits KCNMB1, KCNMB2, KCNMB3 and KCNMB4. Interacts with gamma subunits LRRC26, LRRC38, LRRC52 and LRRC55. Beta and gamma subunits are accessory, and modulate its activity. In terms of processing, phosphorylated. Phosphorylation by kinases such as PKA and/or PKG. In smooth muscles, phosphorylation affects its activity. Palmitoylation by ZDHHC22 and ZDHHC23 within the intracellular linker between the S0 and S1 transmembrane domains regulates localization to the plasma membrane. Depalmitoylated by LYPLA1 and LYPLAL1, leading to retard exit from the trans-Golgi network. As to expression, widely expressed. Except in myocytes, it is almost ubiquitously expressed.

The protein resides in the cell membrane. The enzyme catalyses K(+)(in) = K(+)(out). With respect to regulation, ethanol and carbon monoxide-bound heme increase channel activation. Heme inhibits channel activation. Potassium channel activated by both membrane depolarization or increase in cytosolic Ca(2+) that mediates export of K(+). It is also activated by the concentration of cytosolic Mg(2+). Its activation dampens the excitatory events that elevate the cytosolic Ca(2+) concentration and/or depolarize the cell membrane. It therefore contributes to repolarization of the membrane potential. Plays a key role in controlling excitability in a number of systems, such as regulation of the contraction of smooth muscle, the tuning of hair cells in the cochlea, regulation of transmitter release, and innate immunity. In smooth muscles, its activation by high level of Ca(2+), caused by ryanodine receptors in the sarcoplasmic reticulum, regulates the membrane potential. In cochlea cells, its number and kinetic properties partly determine the characteristic frequency of each hair cell and thereby helps to establish a tonotopic map. Kinetics of KCNMA1 channels are determined by alternative splicing, phosphorylation status and its combination with modulating beta subunits. Highly sensitive to both iberiotoxin (IbTx) and charybdotoxin (CTX). Possibly induces sleep when activated by melatonin and through melatonin receptor MTNR1A-dependent dissociation of G-beta and G-gamma subunits, leading to increased sensitivity to Ca(2+) and reduced synaptic transmission. In terms of biological role, potassium channel activated by both membrane depolarization or increase in cytosolic Ca(2+) that mediates export of K(+). The chain is Calcium-activated potassium channel subunit alpha-1 from Homo sapiens (Human).